The primary structure comprises 788 residues: Spastin (788 aa).

The segment at methionine 1–valine 105 is disordered. Over methionine 1–proline 116 the chain is Cytoplasmic. Residues methionine 1–glycine 227 are required for localization to punctate cytoplasmic foci. Composition is skewed to low complexity over residues serine 8–arginine 48 and alanine 57–aspartate 75. The segment at residues isoleucine 117 to tyrosine 137 is an intramembrane region (helical). Residues leucine 138 to isoleucine 788 lie on the Cytoplasmic side of the membrane. The interval glycine 227–isoleucine 788 is sufficient for interaction with microtubules and microtubule severing. One can recognise an MIT domain in the interval histidine 240 to leucine 315. A compositionally biased stretch (basic and acidic residues) spans glutamate 331–aspartate 353. The interval glutamate 331–proline 484 is disordered. The span at alanine 387–serine 400 shows a compositional bias: low complexity. Composition is skewed to polar residues over residues asparagine 419 to serine 433 and glutamine 453 to isoleucine 469. The interval asparagine 471–valine 485 is required for interaction with microtubules. Position 553–560 (glycine 553–threonine 560) interacts with ATP.

This sequence belongs to the AAA ATPase family. Spastin subfamily. As to quaternary structure, homohexamer. The homohexamer is stabilized by ATP-binding. The homohexamer may adopt a ring conformation through which microtubules pass prior to being severed. Interacts with microtubules. Interacts with atl; may be involved in microtubule dynamics.

It is found in the membrane. Its subcellular location is the cytoplasm. The protein resides in the cytoskeleton. It localises to the microtubule organizing center. The protein localises to the centrosome. It is found in the chromosome. Its subcellular location is the lipid droplet. The catalysed reaction is n ATP + n H2O + a microtubule = n ADP + n phosphate + (n+1) alpha/beta tubulin heterodimers.. In terms of biological role, ATP-dependent microtubule severing protein. Stimulates microtubule minus-end depolymerization and poleward microtubule flux in the mitotic spindle. Regulates microtubule stability in the neuromuscular junction synapse. Involved in lipid metabolism by regulating the size and distribution of lipid droplets. Involved in axon regeneration by regulating microtubule severing. The protein is Spastin of Drosophila persimilis (Fruit fly).